We begin with the raw amino-acid sequence, 504 residues long: MSFSVDVLANIAIELQRGIGHQDRFQRLITTLRQVLECDASALLRYDSRQFIPLAIDGLAKDVLGRRFALEGHPRLEAIARAGDVVRFPADSELPDPYDGLIPGQESLKVHACVGLPLFAGQNLIGALTLDGMQPDQFDVFSDEELRLIAALAAGALSNALLIEQLESQNMMPGDATPFEAVKQTQMIGLSPGMTQLKKEIEIVAASDLNVLISGETGTGKELVAKAIHEASPRAVNPLVYLNCAALPESVAESELFGHVKGAFTGAISNRSGKFEMADNGTLFLDEIGELSLALQAKLLRVLQYGDIQRVGDDRSLRVDVRVLAATNRDLREEVMAGRFRADLFHRLSVFPLSVPPLRERGDDVILLAGYFCEQCRLRLGLSRVVLSAGARNLLQHYRFPGNVRELEHAIHRAVVLARATRNGDEVILEAQHFAFPEVTLPPPEAAAVPVVKQNLREATEAFQRETIRQALAQNHHNWAACARMLETDVANLHRLAKRLGMKD.

D57 carries the 4-aspartylphosphate modification. The 230-residue stretch at M187 to V416 folds into the Sigma-54 factor interaction domain. ATP contacts are provided by residues G215 to E222 and A278 to E287. A DNA-binding region (H-T-H motif) is located at residues W479–K498.

Its pathway is nitrogen metabolism; nitric oxide reduction. Its function is as follows. Required for the expression of anaerobic nitric oxide (NO) reductase, acts as a transcriptional activator for at least the norVW operon. Activation also requires sigma-54. The sequence is that of Anaerobic nitric oxide reductase transcription regulator NorR from Shigella sonnei (strain Ss046).